A 251-amino-acid chain; its full sequence is tRNA pseudouridine synthase A (251 aa).

Asp-26 (nucleophile) is an active-site residue. A substrate-binding site is contributed by Tyr-98.

This sequence belongs to the tRNA pseudouridine synthase TruA family. In terms of assembly, homodimer.

It catalyses the reaction uridine(38/39/40) in tRNA = pseudouridine(38/39/40) in tRNA. In terms of biological role, formation of pseudouridine at positions 38, 39 and 40 in the anticodon stem and loop of transfer RNAs. The sequence is that of tRNA pseudouridine synthase A from Mycolicibacterium paratuberculosis (strain ATCC BAA-968 / K-10) (Mycobacterium paratuberculosis).